The primary structure comprises 407 residues: Multidrug resistance protein MdtH (407 aa).

10 helical membrane-spanning segments follow: residues 13-33, 88-108, 139-159, 163-183, 210-230, 247-267, 277-297, 298-318, 340-360, and 368-388; these read CFLI…FPLI, LGFI…SCML, VLML…TWLL, FKLV…FNAW, FVIY…VMLM, WMYI…TWWS, LMVG…VKNL, HTLL…EPAR, LSLA…YDIG, and LPWI…YCQF.

It belongs to the major facilitator superfamily. DHA1 family. MdtH (TC 2.A.1.2.21) subfamily.

Its subcellular location is the cell inner membrane. The protein is Multidrug resistance protein MdtH of Blochmanniella pennsylvanica (strain BPEN).